We begin with the raw amino-acid sequence, 187 residues long: Large ribosomal subunit protein uL5 (187 aa).

It belongs to the universal ribosomal protein uL5 family. Part of the 50S ribosomal subunit; part of the 5S rRNA/L5/L18/L25 subcomplex. Contacts the 5S rRNA and the P site tRNA. Forms a bridge to the 30S subunit in the 70S ribosome.

This is one of the proteins that bind and probably mediate the attachment of the 5S RNA into the large ribosomal subunit, where it forms part of the central protuberance. In the 70S ribosome it contacts protein S13 of the 30S subunit (bridge B1b), connecting the 2 subunits; this bridge is implicated in subunit movement. Contacts the P site tRNA; the 5S rRNA and some of its associated proteins might help stabilize positioning of ribosome-bound tRNAs. The protein is Large ribosomal subunit protein uL5 of Mycobacterium bovis (strain BCG / Tokyo 172 / ATCC 35737 / TMC 1019).